Consider the following 736-residue polypeptide: Prospero homeobox protein 1 (736 aa).

The span at 103–135 shows a compositional bias: polar residues; sequence KNGGTEPSFQASGLSSTGSEVHQEDVCSNSSRD. The tract at residues 103-146 is disordered; the sequence is KNGGTEPSFQASGLSSTGSEVHQEDVCSNSSRDSPQECLSPFGR. The Nuclear localization signal motif lies at 163-168; the sequence is RAKRAR. Disordered stretches follow at residues 180-220, 261-301, 319-344, 445-465, and 499-518; these read PRVA…QQQS, YDST…EMCE, EIGENKPKREGPKEKDQGPNSFHPEG, NSSDQPASAPPAGGHHASLHQ, and PSASFPGKERASPESLDLTR. Residues 264–274 show a composition bias toward acidic residues; sequence TDSENDEDGNL. Over residues 319-335 the composition is skewed to basic and acidic residues; sequence EIGENKPKREGPKEKDQ. Over residues 450 to 460 the composition is skewed to low complexity; that stretch reads PASAPPAGGHH. The segment covering 505–518 has biased composition (basic and acidic residues); it reads GKERASPESLDLTR. The Prospero-type homeo domain maps to 576-634; that stretch reads QEGLSPNHLKKAKLMFFYTRYPSSNMLKTYFSDVKFNRCITSQLIKWFSNFREFYYIQM. A homeo-Prospero region spans residues 576–734; it reads QEGLSPNHLK…KSPNCLQELL (159 aa). A Prospero domain is found at 635–734; that stretch reads EKYARQAIND…KSPNCLQELL (100 aa).

This sequence belongs to the Prospero homeodomain family. As to expression, expressed most actively in the developing lens and midgut and at lower levels in the developing brain, heart, muscle and retina.

Its subcellular location is the nucleus. Functionally, transcription factor which may be involved in developmental processes such as cell fate determination, gene transcriptional regulation and progenitor cell regulation in a number of organs. May be essential in the development and function of the eye. May play a role in the regulation of the circadian rhythm by repressing the expression of clock genes. The protein is Prospero homeobox protein 1 (PROX1) of Gallus gallus (Chicken).